Consider the following 632-residue polypeptide: Effector protein hopAD1 (632 aa).

Residues 13–34 (TAVDSSLPTSATSQTISNTKSR) are disordered. Over residues 15 to 32 (VDSSLPTSATSQTISNTK) the composition is skewed to polar residues.

It localises to the secreted. The polypeptide is Effector protein hopAD1 (hopAD1) (Pseudomonas syringae pv. tomato (strain ATCC BAA-871 / DC3000)).